A 405-amino-acid polypeptide reads, in one-letter code: MDFRTYLKKYPDKNGRFGQYGGAYLTAELIPAFEEIADAYQTICHSSQFINELRRIRKEFQGRPTPVYHCERLSRAIGNCQIYLKREDLNHTGAHKLNHCMGEGLLAKFMGKKRLIAETGAGQHGVALATAAAFFGLECEIHMGEVDIAKQAPNVTRMKILGAKVVPVTHGLKTLKEAVDSAFDSYAKNYKDSIYCIGSALGPHPFPLMVRDFQAVVGYEAKDQFKEMTGFLPDVVTACVGGGSNAAGMFIPFLEEPVDIIGIEPLGRGEKLGDHAASMKYGEKGVMHGFESIMLKDKNGDPAPVYSIASGLDYPSVGPEHAFLRELGRVDYKVINDEEAMEAFFKLSRYEGIIPAIESSHAVAYAMKKAEEMKQGSILVCLSGRGDKDIDYIVEHYGYGEQYFK.

An N6-(pyridoxal phosphate)lysine modification is found at Lys96.

It belongs to the TrpB family. Tetramer of two alpha and two beta chains. Pyridoxal 5'-phosphate is required as a cofactor.

It catalyses the reaction (1S,2R)-1-C-(indol-3-yl)glycerol 3-phosphate + L-serine = D-glyceraldehyde 3-phosphate + L-tryptophan + H2O. The protein operates within amino-acid biosynthesis; L-tryptophan biosynthesis; L-tryptophan from chorismate: step 5/5. In terms of biological role, the beta subunit is responsible for the synthesis of L-tryptophan from indole and L-serine. The protein is Tryptophan synthase beta chain of Clostridium botulinum (strain Eklund 17B / Type B).